Consider the following 207-residue polypeptide: Alpha-1-acid glycoprotein 8 (207 aa).

An N-terminal signal peptide occupies residues 1–18 (MALHTVLIMLSLLPMLEA). Asn-25, Asn-34, Asn-76, Asn-94, and Asn-104 each carry an N-linked (GlcNAc...) asparagine glycan. Residues Cys-91 and Cys-184 are joined by a disulfide bond.

Belongs to the calycin superfamily. Lipocalin family. As to expression, expressed by the liver and secreted in plasma.

It localises to the secreted. Its function is as follows. Functions as a transport protein in the blood stream. Binds various ligands in the interior of its beta-barrel domain. Appears to function in modulating the activity of the immune system during the acute-phase reaction. This is Alpha-1-acid glycoprotein 8 (Orm8) from Mus caroli (Ryukyu mouse).